The following is a 275-amino-acid chain: Large ribosomal subunit protein uL2 (275 aa).

The interval 224-275 (VMNPVDHPHGGGEGKSPIGRPSPVTPWGKPTLGYKTRKKNKASDKFIIKRRK) is disordered. Residues 264–275 (KASDKFIIKRRK) show a composition bias toward basic and acidic residues.

The protein belongs to the universal ribosomal protein uL2 family. In terms of assembly, part of the 50S ribosomal subunit. Forms a bridge to the 30S subunit in the 70S ribosome.

Functionally, one of the primary rRNA binding proteins. Required for association of the 30S and 50S subunits to form the 70S ribosome, for tRNA binding and peptide bond formation. It has been suggested to have peptidyltransferase activity; this is somewhat controversial. Makes several contacts with the 16S rRNA in the 70S ribosome. The protein is Large ribosomal subunit protein uL2 of Acetivibrio thermocellus (strain ATCC 27405 / DSM 1237 / JCM 9322 / NBRC 103400 / NCIMB 10682 / NRRL B-4536 / VPI 7372) (Clostridium thermocellum).